Here is a 78-residue protein sequence, read N- to C-terminus: Large ribosomal subunit protein bL28 (78 aa).

It belongs to the bacterial ribosomal protein bL28 family.

The sequence is that of Large ribosomal subunit protein bL28 from Pseudoalteromonas atlantica (strain T6c / ATCC BAA-1087).